Reading from the N-terminus, the 90-residue chain is Probable Fe(2+)-trafficking protein (90 aa).

This sequence belongs to the Fe(2+)-trafficking protein family.

Could be a mediator in iron transactions between iron acquisition and iron-requiring processes, such as synthesis and/or repair of Fe-S clusters in biosynthetic enzymes. The chain is Probable Fe(2+)-trafficking protein from Pseudoalteromonas atlantica (strain T6c / ATCC BAA-1087).